The sequence spans 440 residues: Serine hydroxymethyltransferase (440 aa).

(6S)-5,6,7,8-tetrahydrofolate is bound by residues leucine 119 and 123 to 125 (GHL). An N6-(pyridoxal phosphate)lysine modification is found at lysine 228. Position 370–372 (370–372 (SPF)) interacts with (6S)-5,6,7,8-tetrahydrofolate.

The protein belongs to the SHMT family. As to quaternary structure, homodimer. Requires pyridoxal 5'-phosphate as cofactor.

The protein resides in the cytoplasm. The catalysed reaction is (6R)-5,10-methylene-5,6,7,8-tetrahydrofolate + glycine + H2O = (6S)-5,6,7,8-tetrahydrofolate + L-serine. It functions in the pathway one-carbon metabolism; tetrahydrofolate interconversion. Its pathway is amino-acid biosynthesis; glycine biosynthesis; glycine from L-serine: step 1/1. Functionally, catalyzes the reversible interconversion of serine and glycine with tetrahydrofolate (THF) serving as the one-carbon carrier. This reaction serves as the major source of one-carbon groups required for the biosynthesis of purines, thymidylate, methionine, and other important biomolecules. Also exhibits THF-independent aldolase activity toward beta-hydroxyamino acids, producing glycine and aldehydes, via a retro-aldol mechanism. This chain is Serine hydroxymethyltransferase, found in Chlorobium luteolum (strain DSM 273 / BCRC 81028 / 2530) (Pelodictyon luteolum).